The sequence spans 668 residues: DNA ligase (668 aa).

Residues 35–39, 84–85, and E115 contribute to the NAD(+) site; these read DQEYD and SL. The active-site N6-AMP-lysine intermediate is the K117. The NAD(+) site is built by R138, E172, K288, and K312. Zn(2+) is bound by residues C406, C409, C425, and C430. The 80-residue stretch at 589-668 folds into the BRCT domain; it reads KLEGPLKGLV…EEFFDKYGES (80 aa).

The protein belongs to the NAD-dependent DNA ligase family. LigA subfamily. Mg(2+) serves as cofactor. The cofactor is Mn(2+).

The catalysed reaction is NAD(+) + (deoxyribonucleotide)n-3'-hydroxyl + 5'-phospho-(deoxyribonucleotide)m = (deoxyribonucleotide)n+m + AMP + beta-nicotinamide D-nucleotide.. Its function is as follows. DNA ligase that catalyzes the formation of phosphodiester linkages between 5'-phosphoryl and 3'-hydroxyl groups in double-stranded DNA using NAD as a coenzyme and as the energy source for the reaction. It is essential for DNA replication and repair of damaged DNA. This chain is DNA ligase, found in Petrotoga mobilis (strain DSM 10674 / SJ95).